Here is a 1480-residue protein sequence, read N- to C-terminus: Cystic fibrosis transmembrane conductance regulator (1480 aa).

Over 1-77 (MQRSPLEKAS…KLINALRRCF (77 aa)) the chain is Cytoplasmic. The chain crosses the membrane as a helical span at residues 78–98 (FWRFMFYGIFLYLGEVTKAVQ). Residues 81–365 (FMFYGIFLYL…WAVQTWYDSL (285 aa)) enclose the ABC transmembrane type-1 1 domain. The Extracellular segment spans residues 99-122 (PLLLGRIIASYDPDNKEERSIAIY). A helical membrane pass occupies residues 123-146 (LGIGLCLLFIVRTLLLHPAIFGLH). Topologically, residues 147–195 (HIGMQMRIAMFSLIYKKTLKLSSRVLDKISIGQLVSLLSNNLNKFDEGL) are cytoplasmic. The helical transmembrane segment at 196-216 (ALAHFVWIAPLQVALLMGLIW) threads the bilayer. Residues 217 to 222 (ELLQAS) are Extracellular-facing. The helical transmembrane segment at 223–243 (AFCGLGFLIVLALFQAGLGRM) threads the bilayer. Over 244-298 (MMKYRDQRAGKINERLVITSEMIENIQSVKAYCWEEAMEKMIENLRQTELKLTRK) the chain is Cytoplasmic. The helical transmembrane segment at 299-319 (AAYVRYFNSSAFFFSGFFVVF) threads the bilayer. At 320 to 339 (LSVLPYALIKGIVLRKIFTT) the chain is on the extracellular side. The helical transmembrane segment at 340-358 (ISFCIVLRMAVTRQFPWAV) threads the bilayer. Residues 359 to 858 (QTWYDSLGAI…YLRYITVHKS (500 aa)) lie on the Cytoplasmic side of the membrane. ATP-binding positions include W401, S434, 458–465 (GSTGAGKT), and Q493. In terms of domain architecture, ABC transporter 1 spans 423-646 (NGDDSLFFSN…RPDFSSKLMG (224 aa)). Residue C524 is the site of S-palmitoyl cysteine attachment. A phosphoserine mark is found at S549 and S660. The tract at residues 654-831 (SAERRNSILT…EEINEEDLKE (178 aa)) is disordered R region. At S670 the chain carries Phosphoserine; by PKA. K688 is covalently cross-linked (Glycyl lysine isopeptide (Lys-Gly) (interchain with G-Cter in ubiquitin)). Residues S700 and S712 each carry the phosphoserine modification. T717 carries the post-translational modification Phosphothreonine. Residues S737, S753, S768, S790, S795, and S813 each carry the phosphoserine modification. The chain crosses the membrane as a helical span at residues 859–879 (LIFVLIWCLVIFLAEVAASLV). An ABC transmembrane type-1 2 domain is found at 859–1155 (LIFVLIWCLV…AVNSSIDVDS (297 aa)). At 880 to 918 (VLWLLGNTPLQDKGNSTHSRNNSYAVIITSTSSYYVFYI) the chain is on the extracellular side. N-linked (GlcNAc...) asparagine glycans are attached at residues N894 and N900. The discontinuously helical transmembrane segment at 919-939 (YVGVADTLLAMGFFRGLPLVH) threads the bilayer. The Cytoplasmic segment spans residues 940–990 (TLITVSKILHNKMLHSVLQAPMSTLNTLKAGGILNRFSKDIAILDDLLPLT). The chain crosses the membrane as a helical span at residues 991–1011 (IFDFIQLLLIVIGAIAVVAVL). Residues 1012–1013 (QP) lie on the Extracellular side of the membrane. The chain crosses the membrane as a helical span at residues 1014-1034 (YIFVATVPVIVAFIMLRAYFL). The Cytoplasmic portion of the chain corresponds to 1035–1095 (QTSQQLKQLE…TANWFLYLST (61 aa)). Residues 1096 to 1116 (LRWFQMRIEMIFVIFFIAVTF) traverse the membrane as a helical segment. Residues 1117-1130 (ISILTTGEGEGRVG) lie on the Extracellular side of the membrane. Residues 1131-1151 (IILTLAMNIMSTLQWAVNSSI) traverse the membrane as a helical segment. Topologically, residues 1152–1480 (DVDSLMRSVS…TEEEVQDTRL (329 aa)) are cytoplasmic. Residues 1210 to 1443 (MTVKDLTAKY…RSLFQQAISP (234 aa)) form the ABC transporter 2 domain. ATP-binding positions include Y1219 and 1244–1251 (GRTGSGKS). An interaction with GORASP2 region spans residues 1386–1480 (RTLKQAFADC…TEEEVQDTRL (95 aa)). A lipid anchor (S-palmitoyl cysteine) is attached at C1395. Phosphoserine is present on residues S1444 and S1456. The disordered stretch occupies residues 1452–1480 (HRNSSKCKSKPQIAALKEETEEEVQDTRL). Residues 1470–1480 (ETEEEVQDTRL) are compositionally biased toward acidic residues. Positions 1478-1480 (TRL) match the PDZ-binding motif.

It belongs to the ABC transporter superfamily. ABCC family. CFTR transporter (TC 3.A.1.202) subfamily. Monomer; does not require oligomerization for channel activity. May form oligomers in the membrane. Interacts with SLC26A3, SLC26A6 and NHERF1. Interacts with SHANK2. Interacts with MYO6. Interacts (via C-terminus) with GOPC (via PDZ domain); this promotes CFTR internalization and thereby decreases channel activity. Interacts with SLC4A7 through NHERF1. Found in a complex with MYO5B and RAB11A. Interacts with ANO1. Interacts with SLC26A8. Interacts with AHCYL1; the interaction increases CFTR activity. Interacts with CSE1L. The core-glycosylated form interacts with GORASP2 (via PDZ GRASP-type 1 domain) in respone to ER stress. Interacts with MARCHF2; the interaction leads to CFTR ubiqtuitination and degradation. Interacts with ADGRG2. N-glycosylated. In terms of processing, phosphorylated; cAMP treatment promotes phosphorylation and activates the channel. Dephosphorylation decreases the ATPase activity (in vitro). Phosphorylation at PKA sites activates the channel. Phosphorylation at PKC sites enhances the response to phosphorylation by PKA. Phosphorylated by AMPK; this inhibits channel activity. Post-translationally, ubiquitinated, leading to its degradation in the lysosome. Deubiquitination by USP10 in early endosomes enhances its endocytic recycling to the cell membrane. Ubiquitinated by RNF185 during ER stress. Ubiquitinated by MARCHF2.

It is found in the apical cell membrane. Its subcellular location is the early endosome membrane. The protein resides in the cell membrane. It localises to the recycling endosome membrane. The protein localises to the endoplasmic reticulum membrane. It is found in the nucleus. It catalyses the reaction ATP + H2O + closed Cl(-) channel = ADP + phosphate + open Cl(-) channel.. It carries out the reaction chloride(in) = chloride(out). The catalysed reaction is hydrogencarbonate(in) = hydrogencarbonate(out). The enzyme catalyses ATP + H2O = ADP + phosphate + H(+). In terms of biological role, epithelial ion channel that plays an important role in the regulation of epithelial ion and water transport and fluid homeostasis. Mediates the transport of chloride ions across the cell membrane. Possesses an intrinsic ATPase activity and utilizes ATP to gate its channel; the passive flow of anions through the channel is gated by cycles of ATP binding and hydrolysis by the ATP-binding domains. The ion channel is also permeable to HCO(3)(-); selectivity depends on the extracellular chloride concentration. Exerts its function also by modulating the activity of other ion channels and transporters. Contributes to the regulation of the pH and the ion content of the epithelial fluid layer. Modulates the activity of the epithelial sodium channel (ENaC) complex, in part by regulating the cell surface expression of the ENaC complex. May regulate bicarbonate secretion and salvage in epithelial cells by regulating the transporter SLC4A7. Can inhibit the chloride channel activity of ANO1. Plays a role in the chloride and bicarbonate homeostasis during sperm epididymal maturation and capacitation. This Pongo abelii (Sumatran orangutan) protein is Cystic fibrosis transmembrane conductance regulator.